A 394-amino-acid chain; its full sequence is Short-chain dehydrogenase/reductase family 42E member 1 (394 aa).

Tyr153 acts as the Proton acceptor in catalysis. Residue Lys157 coordinates NAD(+). The next 2 helical transmembrane spans lie at 283–303 (LPLT…FIVG) and 367–387 (FMLW…TWIL).

It belongs to the 3-beta-HSD family.

Its subcellular location is the membrane. The protein is Short-chain dehydrogenase/reductase family 42E member 1 (Sdr42e1) of Mus musculus (Mouse).